A 151-amino-acid chain; its full sequence is Deoxyuridine 5'-triphosphate nucleotidohydrolase (151 aa).

Substrate contacts are provided by residues 70–72 (RSG), N83, and 87–89 (VID).

This sequence belongs to the dUTPase family. Mg(2+) is required as a cofactor.

The catalysed reaction is dUTP + H2O = dUMP + diphosphate + H(+). The protein operates within pyrimidine metabolism; dUMP biosynthesis; dUMP from dCTP (dUTP route): step 2/2. Functionally, this enzyme is involved in nucleotide metabolism: it produces dUMP, the immediate precursor of thymidine nucleotides and it decreases the intracellular concentration of dUTP so that uracil cannot be incorporated into DNA. This is Deoxyuridine 5'-triphosphate nucleotidohydrolase from Desulfitobacterium hafniense (strain DSM 10664 / DCB-2).